A 331-amino-acid polypeptide reads, in one-letter code: DNA-directed RNA polymerase subunit alpha (331 aa).

The interval 1–237 (MQSFEKEFLK…DQLSSFIDLK (237 aa)) is alpha N-terminal domain (alpha-NTD). The tract at residues 251-331 (FDPSLLNLVD…NWPPKHLSEQ (81 aa)) is alpha C-terminal domain (alpha-CTD).

Belongs to the RNA polymerase alpha chain family. Homodimer. The RNAP catalytic core consists of 2 alpha, 1 beta, 1 beta' and 1 omega subunit. When a sigma factor is associated with the core the holoenzyme is formed, which can initiate transcription.

It carries out the reaction RNA(n) + a ribonucleoside 5'-triphosphate = RNA(n+1) + diphosphate. In terms of biological role, DNA-dependent RNA polymerase catalyzes the transcription of DNA into RNA using the four ribonucleoside triphosphates as substrates. In Blochmanniella floridana, this protein is DNA-directed RNA polymerase subunit alpha.